An 804-amino-acid chain; its full sequence is Angiotensin-converting enzyme 2 (804 aa).

A signal peptide spans 1–17 (MTGSFWLLLSLVAVTAA). The Extracellular portion of the chain corresponds to 18 to 739 (QSTTEEQAKT…LGPPYEPPVT (722 aa)). One can recognise a Peptidase M2 domain in the interval 19-606 (STTEEQAKTF…QNRNSFVGWS (588 aa)). N-linked (GlcNAc...) asparagine glycosylation is found at asparagine 53 and asparagine 90. Arginine 168 provides a ligand contact to chloride. Arginine 272 contacts substrate. A glycan (N-linked (GlcNAc...) asparagine) is linked at asparagine 298. Cysteine 343 and cysteine 360 are disulfide-bonded. 344–345 (HP) contacts substrate. Histidine 373 provides a ligand contact to Zn(2+). Glutamate 374 acts as the Proton acceptor in catalysis. Zn(2+) contacts are provided by histidine 377 and glutamate 401. N-linked (GlcNAc...) asparagine glycosylation occurs at asparagine 431. Chloride contacts are provided by tryptophan 476 and lysine 480. Histidine 504 acts as the Proton donor in catalysis. Tyrosine 514 lines the substrate pocket. Cysteine 529 and cysteine 541 are disulfide-bonded. An N-linked (GlcNAc...) asparagine glycan is attached at asparagine 545. Residues 613 to 804 (SDQSIKVRIS…QNIDDVQTSL (192 aa)) form the Collectrin-like domain. An essential for cleavage by ADAM17 region spans residues 651 to 658 (RKYFSEAR). N-linked (GlcNAc...) asparagine glycosylation is found at asparagine 659 and asparagine 689. The interval 696 to 715 (RTEVENAIRLSRDRINDVFQ) is essential for cleavage by TMPRSS11D and TMPRSS2. Residues 740 to 760 (IWLIIFGVVMGVVVIGIVVLI) traverse the membrane as a helical segment. Over 761–804 (FTGIRNRRKKNQASSEENPYGSVDLNKGENNSGFQNIDDVQTSL) the chain is Cytoplasmic. The interval 771 to 804 (NQASSEENPYGSVDLNKGENNSGFQNIDDVQTSL) is disordered. The LIR signature appears at 777 to 785 (ENPYGSVDL). Tyrosine 780 carries the phosphotyrosine modification. The Endocytic sorting signal motif lies at 780-783 (YGSV). Residues 780 to 784 (YGSVD) carry the SH2-binding motif. At serine 782 the chain carries Phosphoserine. Lysine 787 participates in a covalent cross-link: Glycyl lysine isopeptide (Lys-Gly) (interchain with G-Cter in ubiquitin). A compositionally biased stretch (polar residues) spans 788 to 804 (GENNSGFQNIDDVQTSL). A PTB motif is present at residues 791–794 (NSGF). The PDZ-binding motif lies at 802 to 804 (TSL).

This sequence belongs to the peptidase M2 family. Homodimer. Interacts with the catalytically active form of TMPRSS2. Interacts with SLC6A19; this interaction is essential for expression and function of SLC6A19 in intestine. Interacts with ITGA5:ITGB1. Probably interacts (via endocytic sorting signal motif) with AP2M1; the interaction is inhibited by phosphorylation of Tyr-780. Interacts (via PDZ-binding motif) with NHERF1 (via PDZ domains); the interaction may enhance ACE2 membrane residence. Zn(2+) is required as a cofactor. It depends on chloride as a cofactor. Proteolytic cleavage by ADAM17 generates a secreted form. Also cleaved by serine proteases: TMPRSS2, TMPRSS11D and HPN/TMPRSS1. In terms of processing, phosphorylated. Phosphorylation at Tyr-780 probably inhibits interaction with AP2M1 and enables interactions with proteins containing SH2 domains. Post-translationally, ubiquitinated. Ubiquitinated on Lys-787 via 'Lys-48'-linked ubiquitin. 'Lys-48'-linked deubiquitinated by USP50 on the Lys-787; leading to its stabilization.

It localises to the secreted. The protein localises to the cell membrane. The protein resides in the cytoplasm. Its subcellular location is the cell projection. It is found in the cilium. It localises to the apical cell membrane. It catalyses the reaction angiotensin II + H2O = angiotensin-(1-7) + L-phenylalanine. The catalysed reaction is angiotensin I + H2O = angiotensin-(1-9) + L-leucine. The enzyme catalyses bradykinin(1-8) + H2O = bradykinin(1-7) + L-phenylalanine. It carries out the reaction neurotensin + H2O = neurotensin-(1-12) + L-leucine. It catalyses the reaction kinetensin + H2O = kinetensin-(1-8) + L-leucine. The catalysed reaction is dynorphin A-(1-13) + H2O = dynorphin A-(1-12) + L-lysine. The enzyme catalyses apelin-13 + H2O = apelin-12 + L-phenylalanine. It carries out the reaction [Pyr1]apelin-13 + H2O = [Pyr1]apelin-12 + L-phenylalanine. It catalyses the reaction apelin-17 + H2O = apelin-16 + L-phenylalanine. Its function is as follows. Essential counter-regulatory carboxypeptidase of the renin-angiotensin hormone system that is a critical regulator of blood volume, systemic vascular resistance, and thus cardiovascular homeostasis. Converts angiotensin I to angiotensin 1-9, a nine-amino acid peptide with anti-hypertrophic effects in cardiomyocytes, and angiotensin II to angiotensin 1-7, which then acts as a beneficial vasodilator and anti-proliferation agent, counterbalancing the actions of the vasoconstrictor angiotensin II. Also removes the C-terminal residue from three other vasoactive peptides, neurotensin, kinetensin, and des-Arg bradykinin, but is not active on bradykinin. Also cleaves other biological peptides, such as apelins, casomorphins and dynorphin A. Plays an important role in amino acid transport by acting as binding partner of amino acid transporter SLC6A19 in intestine, regulating trafficking, expression on the cell surface, and its catalytic activity. In Bos taurus (Bovine), this protein is Angiotensin-converting enzyme 2 (ACE2).